We begin with the raw amino-acid sequence, 304 residues long: MKFSLENIISIRDFKKSDVEYILNLAEEMEPIAKSQKVCHEKDGKLLGVMFYEPSTRTRLSFETAMKRLGGDVVGFNQKQGTSIQKGEVLYDTAQIVSQYTDAIVLRHDMEGAARFVSNIVDVPVINAGDGAGQHPTQTMLDLYTIKRTLGELKNLKIALVGDLKYGRTVHSLVYALAMFNVEIVFISPSELEMPPEILRDLEKLNCKFSIKNSLIENIDDVDVIYMTRIQKERFPDPKEYLKVKGQYTLTSKNLKDSNTIIMHPLPRVDEIDFNVDNLSNAMYFKQAFYGVPVRMALLDSIIK.

Positions 57 and 58 each coordinate carbamoyl phosphate. K86 is an L-aspartate binding site. Positions 107, 135, and 138 each coordinate carbamoyl phosphate. L-aspartate-binding residues include R168 and R229. Carbamoyl phosphate contacts are provided by L266 and P267.

Belongs to the aspartate/ornithine carbamoyltransferase superfamily. ATCase family. In terms of assembly, heterooligomer of catalytic and regulatory chains.

It catalyses the reaction carbamoyl phosphate + L-aspartate = N-carbamoyl-L-aspartate + phosphate + H(+). The protein operates within pyrimidine metabolism; UMP biosynthesis via de novo pathway; (S)-dihydroorotate from bicarbonate: step 2/3. Its function is as follows. Catalyzes the condensation of carbamoyl phosphate and aspartate to form carbamoyl aspartate and inorganic phosphate, the committed step in the de novo pyrimidine nucleotide biosynthesis pathway. In Methanosphaera stadtmanae (strain ATCC 43021 / DSM 3091 / JCM 11832 / MCB-3), this protein is Aspartate carbamoyltransferase catalytic subunit.